The following is a 322-amino-acid chain: N-acetyl-gamma-glutamyl-phosphate reductase (322 aa).

Cysteine 132 is a catalytic residue.

This sequence belongs to the NAGSA dehydrogenase family. Type 1 subfamily.

It localises to the cytoplasm. The enzyme catalyses N-acetyl-L-glutamate 5-semialdehyde + phosphate + NADP(+) = N-acetyl-L-glutamyl 5-phosphate + NADPH + H(+). The protein operates within amino-acid biosynthesis; L-arginine biosynthesis; N(2)-acetyl-L-ornithine from L-glutamate: step 3/4. In terms of biological role, catalyzes the NADPH-dependent reduction of N-acetyl-5-glutamyl phosphate to yield N-acetyl-L-glutamate 5-semialdehyde. This chain is N-acetyl-gamma-glutamyl-phosphate reductase, found in Bacteroides fragilis (strain ATCC 25285 / DSM 2151 / CCUG 4856 / JCM 11019 / LMG 10263 / NCTC 9343 / Onslow / VPI 2553 / EN-2).